Here is a 507-residue protein sequence, read N- to C-terminus: uncharacterized protein (507 aa).

14 helical membrane-spanning segments follow: residues 8 to 28 (VKGV…AYLV), 41 to 61 (VGLF…RAFG), 86 to 106 (IVFV…LVVI), 130 to 150 (INIL…VAFF), 171 to 191 (ILSV…HNAY), 193 to 213 (PSVS…YIVV), 235 to 255 (LFSY…LGYL), 275 to 295 (VAMP…AVLF), 323 to 343 (IIVT…INIL), 355 to 375 (IQIL…FNIL), 387 to 407 (ILYI…PKFG), 408 to 428 (IIGA…FQIW), 444 to 464 (ILVI…KDLI), and 467 to 487 (VILQ…LGIF).

Belongs to the polysaccharide synthase family.

Its subcellular location is the cell membrane. This is an uncharacterized protein from Methanocaldococcus jannaschii (strain ATCC 43067 / DSM 2661 / JAL-1 / JCM 10045 / NBRC 100440) (Methanococcus jannaschii).